Reading from the N-terminus, the 411-residue chain is MTDGPIKVNSEIGALKTVLLKRPGKELENLVPDYLDGLLFDDIPYLEVAQKEHDHFAQVLREEGVEVLYLEKLAAESIENPQVRSEFIDDVLAESKKTILGHEEEIKALFATLSNQELVDKIMSGVRKEEINPKCTHLVEYMDDKYPFYLDPMPNLYFTRDPQASIGHGITINRMFWRARRRESIFIQYIVKHHPRFKDANIPIWLDRDCPFNIEGGDELVLSKDVLAIGVSERTSAQAIEKLARRIFENPQATFKKVVAIEIPTSRTFMHLDTVFTMIDYDKFTMHSAILKAEGNMNIFIIEYDDVNKDIAIKQSSHLKDTLEDVLGIDDIQFIPTGNGDVIDGAREQWNDGSNTLCIRPGVVVTYDRNYVSNDLLRQKGIKVIEISGSELVRGRGGPRCMSQPLFREDI.

The active-site Amidino-cysteine intermediate is the Cys401.

This sequence belongs to the arginine deiminase family.

The protein localises to the cytoplasm. The enzyme catalyses L-arginine + H2O = L-citrulline + NH4(+). It participates in amino-acid degradation; L-arginine degradation via ADI pathway; carbamoyl phosphate from L-arginine: step 1/2. This Staphylococcus aureus (strain bovine RF122 / ET3-1) protein is Arginine deiminase.